Reading from the N-terminus, the 210-residue chain is 3,4-dihydroxy-2-butanone 4-phosphate synthase (210 aa).

D-ribulose 5-phosphate is bound by residues 33–34, aspartate 38, 146–150, and glutamate 170; these read RE and RRGHT. Glutamate 34 contacts Mg(2+). Histidine 149 contributes to the Mg(2+) binding site.

This sequence belongs to the DHBP synthase family. In terms of assembly, homodimer. Mg(2+) serves as cofactor. The cofactor is Mn(2+).

The catalysed reaction is D-ribulose 5-phosphate = (2S)-2-hydroxy-3-oxobutyl phosphate + formate + H(+). Its pathway is cofactor biosynthesis; riboflavin biosynthesis; 2-hydroxy-3-oxobutyl phosphate from D-ribulose 5-phosphate: step 1/1. Its function is as follows. Catalyzes the conversion of D-ribulose 5-phosphate to formate and 3,4-dihydroxy-2-butanone 4-phosphate. This chain is 3,4-dihydroxy-2-butanone 4-phosphate synthase, found in Chromobacterium violaceum (strain ATCC 12472 / DSM 30191 / JCM 1249 / CCUG 213 / NBRC 12614 / NCIMB 9131 / NCTC 9757 / MK).